The sequence spans 305 residues: Spermatogenesis-associated protein 4 (305 aa).

One can recognise a Calponin-homology (CH) domain in the interval 49–155 (SRLSRSVLRW…EEVYTLLTHR (107 aa)).

As to expression, highly expressed in testis, the expression is observed precisely in seminiferous tubules.

The protein resides in the nucleus. Functionally, may play a role in apoptosis regulation. This chain is Spermatogenesis-associated protein 4 (SPATA4), found in Homo sapiens (Human).